We begin with the raw amino-acid sequence, 60 residues long: MDTKLLELLVCPVTKGHLEYDREKHELISRSARLAYPVRDGIPVMLENEARTLTDEELGL.

The protein belongs to the UPF0434 family.

This Polaromonas naphthalenivorans (strain CJ2) protein is UPF0434 protein Pnap_1922.